The chain runs to 573 residues: ESX-1 secretion system protein EccA1 (573 aa).

334 to 341 (GPPGTGKT) provides a ligand contact to ATP.

It belongs to the CbxX/CfxQ family. As to quaternary structure, part of the ESX-1 / type VII secretion system (T7SS), which is composed of cytosolic and membrane components.

It is found in the cytoplasm. In terms of biological role, part of the ESX-1 / type VII specialized secretion system (T7SS), which exports several proteins including EsxA and EsxB. EccA1 exhibits ATPase activity and may provide energy for the export of ESX-1 substrates. This is ESX-1 secretion system protein EccA1 from Mycobacterium leprae (strain TN).